Reading from the N-terminus, the 252-residue chain is Transmembrane ascorbate-dependent reductase CYB561 (252 aa).

Met1 bears the N-acetylmethionine mark. Residues 1-17 (MEGPASPAPAPGALPYY) are Cytoplasmic-facing. Residues 18-38 (VAFSQLLGLTVVAMTGAWLGM) form a helical membrane-spanning segment. One can recognise a Cytochrome b561 domain in the interval 20 to 221 (FSQLLGLTVV…FATVVLYILT (202 aa)). At 39 to 52 (YRGGIAWESALQFN) the chain is on the vesicular side. A helical transmembrane segment spans residues 53-73 (VHPLCMVIGLVFLQGDALLVY). Heme b-binding residues include His54, Arg74, and Lys81. At 74–86 (RVFRNEAKRTTKV) the chain is on the cytoplasmic side. Residues Lys81 and Lys85 each contribute to the L-ascorbate site. The chain crosses the membrane as a helical span at residues 87 to 107 (LHGLLHVFAFVIALVGLVAVF). Residues His88, 117 to 120 (DLYS), and His122 each bind heme b. Over 108 to 125 (EHHRKKGYADLYSLHSWC) the chain is Vesicular. The chain crosses the membrane as a helical span at residues 126 to 146 (GILVFALFFAQWLVGFSFFLF). Over 147–159 (PGASFSLRSRYRP) the chain is Cytoplasmic. L-ascorbate is bound at residue Arg154. Residues 160–180 (QHVFFGAAIFLLSVATALLGL) traverse the membrane as a helical segment. Residues His161 and Glu182 each coordinate heme b. At 181 to 199 (KEALLFELGTKYSTFEPEG) the chain is on the vesicular side. A helical transmembrane segment spans residues 200–220 (VLANVLGLLLAAFATVVLYIL). At 221–252 (TRADWKRPLQAEEQALSMDFKTLTEGDSPSSQ) the chain is on the cytoplasmic side. Lys226 provides a ligand contact to heme b. 2 positions are modified to phosphoserine: Ser248 and Ser250.

It depends on heme b as a cofactor.

It is found in the cytoplasmic vesicle. It localises to the secretory vesicle. The protein resides in the chromaffin granule membrane. The catalysed reaction is monodehydro-L-ascorbate radical(out) + L-ascorbate(in) = monodehydro-L-ascorbate radical(in) + L-ascorbate(out). Functionally, transmembrane reductase that uses ascorbate as an electron donor in the cytoplasm and transfers electrons across membranes to reduce monodehydro-L-ascorbate radical in the lumen of secretory vesicles. It is therefore involved the regeneration and homeostasis within secretory vesicles of ascorbate which in turn provides reducing equivalents needed to support the activity of intravesicular enzymes. The protein is Transmembrane ascorbate-dependent reductase CYB561 (CYB561) of Ovis aries (Sheep).